A 60-amino-acid polypeptide reads, in one-letter code: UPF0434 protein YcaR (60 aa).

The protein belongs to the UPF0434 family.

In Escherichia fergusonii (strain ATCC 35469 / DSM 13698 / CCUG 18766 / IAM 14443 / JCM 21226 / LMG 7866 / NBRC 102419 / NCTC 12128 / CDC 0568-73), this protein is UPF0434 protein YcaR.